A 579-amino-acid polypeptide reads, in one-letter code: MSHPPLPPQSERRALAIAQAVYEAFEDYHARFSEITARAKQRFETRDWSGAREDAVARIALYDQYIAECMLRLRAVLLGQAHDRALWMRARDHYAALLSGLIDQELYKTFYNTLTRRYFGTHGVDADIEFIALDIEPTDAITVPVARHTYAVSPGRLTDMLVRVLGDYAFAVPYTHRTRCAAAIAVRLLDDLAHWGEHPVRSVELLETVFYRERRAYLVGRVFGEHRFSPCVIALINDEAGLRAEAVLTRRSDVAQLFSNSRSYFQADLSTVGDAVVFLRSLLTHKPVDELYTMLGRAKQGKTERYRTFFSHFQAHPSEQLVHADGTPGMVMVVFTLPSYPLVFKLIRDRFAYPKTMSRAQVEGKYELVFQLDRIGRLLDAQPYRFLRFPKARFSPALLQELQTSCAMSLSEDGDDVLIALCYVQRRLRPLNLYLREQLPEAAHAAALDYGQAIKDMARNNIFPGDMLLKNFGITRHQRAVFYDYDELCLITECNFRDWPVPTTYEEQMAAEPWFHVGPRDVFPERFALFMGLPASQLEAVKHQHPELFDPRWWRDLQSRLREDDYPDTPPYAESRRLA.

Residues 324 to 330 (ADGTPGM) and Lys345 contribute to the ATP site. Residue Asp380 is part of the active site.

The protein belongs to the AceK family.

Its subcellular location is the cytoplasm. The catalysed reaction is L-seryl-[isocitrate dehydrogenase] + ATP = O-phospho-L-seryl-[isocitrate dehydrogenase] + ADP + H(+). Bifunctional enzyme which can phosphorylate or dephosphorylate isocitrate dehydrogenase (IDH) on a specific serine residue. This is a regulatory mechanism which enables bacteria to bypass the Krebs cycle via the glyoxylate shunt in response to the source of carbon. When bacteria are grown on glucose, IDH is fully active and unphosphorylated, but when grown on acetate or ethanol, the activity of IDH declines drastically concomitant with its phosphorylation. This chain is Isocitrate dehydrogenase kinase/phosphatase, found in Xanthomonas euvesicatoria pv. vesicatoria (strain 85-10) (Xanthomonas campestris pv. vesicatoria).